Reading from the N-terminus, the 120-residue chain is NAD(P)H-quinone oxidoreductase subunit 3, chloroplastic (120 aa).

3 helical membrane passes run 7 to 27, 64 to 84, and 89 to 109; these read YDYF…IFSL, MFAL…PWAM, and FGIS…IGLV.

Belongs to the complex I subunit 3 family. NDH is composed of at least 16 different subunits, 5 of which are encoded in the nucleus.

The protein resides in the plastid. It is found in the chloroplast thylakoid membrane. The enzyme catalyses a plastoquinone + NADH + (n+1) H(+)(in) = a plastoquinol + NAD(+) + n H(+)(out). It catalyses the reaction a plastoquinone + NADPH + (n+1) H(+)(in) = a plastoquinol + NADP(+) + n H(+)(out). NDH shuttles electrons from NAD(P)H:plastoquinone, via FMN and iron-sulfur (Fe-S) centers, to quinones in the photosynthetic chain and possibly in a chloroplast respiratory chain. The immediate electron acceptor for the enzyme in this species is believed to be plastoquinone. Couples the redox reaction to proton translocation, and thus conserves the redox energy in a proton gradient. The sequence is that of NAD(P)H-quinone oxidoreductase subunit 3, chloroplastic from Marchantia polymorpha (Common liverwort).